The following is a 72-amino-acid chain: Translation initiation factor IF-1 (72 aa).

In terms of domain architecture, S1-like spans 1–72; it reads MSKEDVIELE…TRGRIVWRSK (72 aa).

This sequence belongs to the IF-1 family. Component of the 30S ribosomal translation pre-initiation complex which assembles on the 30S ribosome in the order IF-2 and IF-3, IF-1 and N-formylmethionyl-tRNA(fMet); mRNA recruitment can occur at any time during PIC assembly.

The protein resides in the cytoplasm. In terms of biological role, one of the essential components for the initiation of protein synthesis. Stabilizes the binding of IF-2 and IF-3 on the 30S subunit to which N-formylmethionyl-tRNA(fMet) subsequently binds. Helps modulate mRNA selection, yielding the 30S pre-initiation complex (PIC). Upon addition of the 50S ribosomal subunit IF-1, IF-2 and IF-3 are released leaving the mature 70S translation initiation complex. This Caldicellulosiruptor saccharolyticus (strain ATCC 43494 / DSM 8903 / Tp8T 6331) protein is Translation initiation factor IF-1.